We begin with the raw amino-acid sequence, 457 residues long: Trigger factor (457 aa).

The PPIase FKBP-type domain maps to 162 to 243 (GDFVSIDLSA…VQTVKERELP (82 aa)). The interval 434–457 (AELFGSSEDETEADASDSAESEDK) is disordered. Over residues 440–457 (SEDETEADASDSAESEDK) the composition is skewed to acidic residues.

Belongs to the FKBP-type PPIase family. Tig subfamily.

It localises to the cytoplasm. It carries out the reaction [protein]-peptidylproline (omega=180) = [protein]-peptidylproline (omega=0). Functionally, involved in protein export. Acts as a chaperone by maintaining the newly synthesized protein in an open conformation. Functions as a peptidyl-prolyl cis-trans isomerase. The chain is Trigger factor from Rhodococcus erythropolis (strain PR4 / NBRC 100887).